The chain runs to 136 residues: Class I hydrophobin A (136 aa).

An N-terminal signal peptide occupies residues 1–16; it reads MRFALAITTLIAAVTA. Disulfide bonds link cysteine 39-cysteine 109, cysteine 47-cysteine 103, cysteine 48-cysteine 85, and cysteine 110-cysteine 128.

This sequence belongs to the fungal hydrophobin family. In terms of tissue distribution, expressed in aerial conidia, in vitro blastospores, submerged conidia, and cells sporulating on chitin and insect cuticle, with hyd1 expression peaking in growing mycelia.

Its subcellular location is the secreted. The protein localises to the cell wall. It localises to the spore coat. It is found in the vacuole. The protein resides in the cytoplasmic vesicle. Its function is as follows. Aerial growth, conidiation, and dispersal of filamentous fungi in the environment rely upon a capability of their secreting small amphipathic proteins called hydrophobins (HPBs) with low sequence identity. Class I can self-assemble into an outermost layer of rodlet bundles on aerial cell surfaces, conferring cellular hydrophobicity that supports fungal growth, development and dispersal; whereas Class II form highly ordered films at water-air interfaces through intermolecular interactions but contribute nothing to the rodlet structure. Hyd1A contributes to certain cell wall-related features, such as hydrophobicity but is not involved in cell wall-related events during fungal proliferation in host hemocoel. Hyd1A and hyd1B coregulate the formation, morphology and orderly assembly of rodlet bundles required for conidial hydrophobicity and infectivity. Contributes to the spore coat rodlet layer. This chain is Class I hydrophobin A, found in Beauveria bassiana (strain ARSEF 2860) (White muscardine disease fungus).